The following is a 342-amino-acid chain: tRNA N6-adenosine threonylcarbamoyltransferase (342 aa).

Fe cation contacts are provided by His112 and His116. Substrate-binding positions include 134 to 138 (LASGG), Asp167, Gly180, and Asn280. Position 308 (Asp308) interacts with Fe cation.

The protein belongs to the KAE1 / TsaD family. The cofactor is Fe(2+).

The protein resides in the cytoplasm. It carries out the reaction L-threonylcarbamoyladenylate + adenosine(37) in tRNA = N(6)-L-threonylcarbamoyladenosine(37) in tRNA + AMP + H(+). Functionally, required for the formation of a threonylcarbamoyl group on adenosine at position 37 (t(6)A37) in tRNAs that read codons beginning with adenine. Is involved in the transfer of the threonylcarbamoyl moiety of threonylcarbamoyl-AMP (TC-AMP) to the N6 group of A37, together with TsaE and TsaB. TsaD likely plays a direct catalytic role in this reaction. The protein is tRNA N6-adenosine threonylcarbamoyltransferase of Rickettsia canadensis (strain McKiel).